The chain runs to 606 residues: Elongation factor 4 (606 aa).

Residues 10–192 form the tr-type G domain; sequence ENIRNFSIIA…AIVQQLPAPK (183 aa). Residues 22-27 and 139-142 contribute to the GTP site; these read DHGKST and NKID.

It belongs to the TRAFAC class translation factor GTPase superfamily. Classic translation factor GTPase family. LepA subfamily.

It is found in the cell membrane. The catalysed reaction is GTP + H2O = GDP + phosphate + H(+). Functionally, required for accurate and efficient protein synthesis under certain stress conditions. May act as a fidelity factor of the translation reaction, by catalyzing a one-codon backward translocation of tRNAs on improperly translocated ribosomes. Back-translocation proceeds from a post-translocation (POST) complex to a pre-translocation (PRE) complex, thus giving elongation factor G a second chance to translocate the tRNAs correctly. Binds to ribosomes in a GTP-dependent manner. This Lawsonia intracellularis (strain PHE/MN1-00) protein is Elongation factor 4.